The following is a 269-amino-acid chain: Prespore protein Dd31 (269 aa).

Polar residues predominate over residues 1 to 17; it reads MEHNNNPGTPQMSSEFP. Residues 1–35 are disordered; sequence MEHNNNPGTPQMSSEFPASTTQTSSSAAAYDNSSH. The span at 18–29 shows a compositional bias: low complexity; it reads ASTTQTSSSAAA. The next 4 membrane-spanning stretches (helical) occupy residues 111–131, 139–159, 177–197, and 225–245; these read FGIFVFLWEAAALVYNWVVSI, VDNFFLALFYMIVGVPTLYFL, YAYLMALLGVVLFNIIFFVGF, and VSLFFWFVGVFLTIALFIMYL.

The protein belongs to the SCAMP family.

Its subcellular location is the membrane. It localises to the spore coat. This chain is Prespore protein Dd31 (spiA), found in Dictyostelium discoideum (Social amoeba).